We begin with the raw amino-acid sequence, 397 residues long: Leucine carboxyl methyltransferase 1 (397 aa).

Positions 17–61 (AIQTPPPTDPNAAPAHRPAPRPALGRCRPPHRRRRRLRPPVRPPL) are disordered. Over residues 26 to 43 (PNAAPAHRPAPRPALGRC) the composition is skewed to low complexity. The span at 44–55 (RPPHRRRRRLRP) shows a compositional bias: basic residues. S-adenosyl-L-methionine-binding positions include arginine 119, glycine 142, aspartate 168, 224-225 (DL), and glutamate 259.

It belongs to the methyltransferase superfamily. LCMT family.

It carries out the reaction [phosphatase 2A protein]-C-terminal L-leucine + S-adenosyl-L-methionine = [phosphatase 2A protein]-C-terminal L-leucine methyl ester + S-adenosyl-L-homocysteine. In terms of biological role, methylates the carboxyl group of the C-terminal leucine residue of protein phosphatase 2A catalytic subunits to form alpha-leucine ester residues. The chain is Leucine carboxyl methyltransferase 1 (PPM1) from Cryptococcus neoformans var. neoformans serotype D (strain B-3501A) (Filobasidiella neoformans).